The chain runs to 275 residues: NH(3)-dependent NAD(+) synthetase (275 aa).

Residue 46–53 (GISGGQDS) participates in ATP binding. Aspartate 52 serves as a coordination point for Mg(2+). Arginine 140 serves as a coordination point for deamido-NAD(+). ATP is bound at residue threonine 160. A Mg(2+)-binding site is contributed by glutamate 165. Deamido-NAD(+) is bound by residues lysine 173 and aspartate 180. ATP contacts are provided by lysine 189 and threonine 211. A deamido-NAD(+)-binding site is contributed by 260–261 (HK).

It belongs to the NAD synthetase family. Homodimer.

The catalysed reaction is deamido-NAD(+) + NH4(+) + ATP = AMP + diphosphate + NAD(+) + H(+). The protein operates within cofactor biosynthesis; NAD(+) biosynthesis; NAD(+) from deamido-NAD(+) (ammonia route): step 1/1. Catalyzes the ATP-dependent amidation of deamido-NAD to form NAD. Uses ammonia as a nitrogen source. The chain is NH(3)-dependent NAD(+) synthetase from Shigella dysenteriae serotype 1 (strain Sd197).